A 305-amino-acid polypeptide reads, in one-letter code: Peroxidase A2 (305 aa).

Pyrrolidone carboxylic acid is present on Gln-1. 2 N-linked (GlcNAc...) asparagine glycosylation sites follow: Asn-3 and Asn-13. Intrachain disulfides connect Cys-11–Cys-91, Cys-44–Cys-49, Cys-97–Cys-299, and Cys-176–Cys-208. The active-site Proton acceptor is the His-42. Asp-43, Val-46, Gly-48, Asp-50, and Ser-52 together coordinate Ca(2+). Pro-139 serves as a coordination point for substrate. Residue Asn-147 is glycosylated (N-linked (GlcNAc...) asparagine). His-169 provides a ligand contact to heme b. Ca(2+) is bound at residue Thr-170. Asn-185, Asn-197, and Asn-211 each carry an N-linked (GlcNAc...) asparagine glycan. Positions 221, 224, and 229 each coordinate Ca(2+). Asn-267 carries an N-linked (GlcNAc...) asparagine glycan.

It belongs to the peroxidase family. Classical plant (class III) peroxidase subfamily. It depends on Ca(2+) as a cofactor. Heme b is required as a cofactor.

It catalyses the reaction 2 a phenolic donor + H2O2 = 2 a phenolic radical donor + 2 H2O. In terms of biological role, removal of H(2)O(2), oxidation of toxic reductants, biosynthesis and degradation of lignin, suberization, auxin catabolism, response to environmental stresses such as wounding, pathogen attack and oxidative stress. These functions might be dependent on each isozyme/isoform in each plant tissue. The protein is Peroxidase A2 (HRPA2) of Armoracia rusticana (Horseradish).